The following is a 286-amino-acid chain: MNKILLKTTIIFTALFSLNVVASPLDWQKVKRPIPSEDGKASPIGSYTNGCIIGAQALPPKGEGYQVIRMNRNRYYGHPNMIQYLERLGQRAKAAGLPTMLVGDIAMPGGGRFLTGHASHQMGLDADIWLRMGEMSDADALNSDGKGLLVVDRKAQRVDERVWNSNHATLIKLAAQDPNVTRIFVNPAIKVKLCQTAGNDRGWLHKIRPWHGHNSHFHVRLTCPADASYCENQAPVPAGDGCGDELYSWFEPPKPGTSVSKPKVTPPEPFLCQQILNSPNRREWLE.

Positions 1–22 (MNKILLKTTIIFTALFSLNVVA) are cleaved as a signal peptide. Zn(2+)-binding residues include His117, His120, Asp127, Asp152, and His218.

The protein belongs to the peptidase M74 family. It depends on Zn(2+) as a cofactor.

The protein resides in the periplasm. Functionally, murein endopeptidase that cleaves the D-alanyl-meso-2,6-diamino-pimelyl amide bond that connects peptidoglycan strands. Likely plays a role in the removal of murein from the sacculus. The polypeptide is Penicillin-insensitive murein endopeptidase (mepA) (Haemophilus influenzae (strain ATCC 51907 / DSM 11121 / KW20 / Rd)).